The primary structure comprises 141 residues: Small ribosomal subunit protein uS12 (141 aa).

The protein belongs to the universal ribosomal protein uS12 family. In terms of assembly, part of the 30S ribosomal subunit.

Its function is as follows. With S4 and S5 plays an important role in translational accuracy. Located at the interface of the 30S and 50S subunits. This chain is Small ribosomal subunit protein uS12, found in Methanothermobacter thermautotrophicus (strain ATCC 29096 / DSM 1053 / JCM 10044 / NBRC 100330 / Delta H) (Methanobacterium thermoautotrophicum).